Consider the following 360-residue polypeptide: Polyamine aminopropyltransferase 2 (360 aa).

One can recognise a PABS domain in the interval 68–299 (DIWDEISLKE…TDWGFHIAAN (232 aa)). Residue Q94 participates in S-methyl-5'-thioadenosine binding. Positions 123 and 147 each coordinate spermidine. S-methyl-5'-thioadenosine is bound by residues D167 and 201 to 202 (DA). Residue D219 is the Proton acceptor of the active site.

The protein belongs to the spermidine/spermine synthase family. In terms of assembly, homodimer or homotetramer.

Its subcellular location is the cytoplasm. The catalysed reaction is S-adenosyl 3-(methylsulfanyl)propylamine + putrescine = S-methyl-5'-thioadenosine + spermidine + H(+). Its pathway is amine and polyamine biosynthesis; spermidine biosynthesis; spermidine from putrescine: step 1/1. Its function is as follows. Catalyzes the irreversible transfer of a propylamine group from the amino donor S-adenosylmethioninamine (decarboxy-AdoMet) to putrescine (1,4-diaminobutane) to yield spermidine. This Bacillus anthracis protein is Polyamine aminopropyltransferase 2.